Reading from the N-terminus, the 366-residue chain is 5-hydroxytryptamine receptor 1F (366 aa).

The Extracellular segment spans residues 1 to 24; sequence MDFLNSSDQNLTSEELLHRMPSKI. N-linked (GlcNAc...) asparagine glycosylation is found at asparagine 5 and asparagine 10. Residues 25–49 form a helical membrane-spanning segment; sequence LVSLTLSGLALMTTTINSLVIAAII. The Cytoplasmic segment spans residues 50–59; it reads VTRKLHHPAN. The chain crosses the membrane as a helical span at residues 60 to 81; sequence YLICSLAVTDFLVAVLVMPFSI. Topologically, residues 82–96 are extracellular; that stretch reads VYIVRESWIMGQVLC. Cysteine 96 and cysteine 172 are oxidised to a cystine. A helical transmembrane segment spans residues 97-119; that stretch reads DIWLSVDIICCTCSILHLSAIAL. Serotonin is bound by residues aspartate 103 and cysteine 107. The short motif at 120-122 is the DRY motif; important for ligand-induced conformation changes element; the sequence is DRY. Topologically, residues 120-139 are cytoplasmic; the sequence is DRYRAITDAVEYARKRTPKQ. Residues 140-159 traverse the membrane as a helical segment; the sequence is AGIMITIVWIISVFISMPPL. At 160-178 the chain is on the extracellular side; the sequence is FWRHQGTSRDDECIIKHDH. A helical transmembrane segment spans residues 179 to 202; the sequence is IVSTIYSTFGAFYIPLVLILILYY. Residues 203–291 lie on the Cytoplasmic side of the membrane; the sequence is KIYKAAKTLY…KISGTRERKA (89 aa). A helical transmembrane segment spans residues 292-315; it reads ATTLGLILGAFVICWLPFFVKELV. The Extracellular segment spans residues 316 to 327; sequence VNVCEKCKISEE. Residues 328–350 form a helical membrane-spanning segment; that stretch reads MANFLAWLGYLNSLINPLIYTIF. The NPxxY motif; important for ligand-induced conformation changes and signaling signature appears at 343-347; it reads NPLIY. At 351–366 the chain is on the cytoplasmic side; the sequence is NEDFKKAFQKLVRCQY.

This sequence belongs to the G-protein coupled receptor 1 family.

It localises to the cell membrane. Functionally, G-protein coupled receptor for 5-hydroxytryptamine (serotonin). Also functions as a receptor for various alkaloids and psychoactive substances. Ligand binding causes a conformation change that triggers signaling via guanine nucleotide-binding proteins (G proteins) and modulates the activity of downstream effectors, such as adenylate cyclase. HTR1F is coupled to G(i)/G(o) G alpha proteins and mediates inhibitory neurotransmission by inhibiting adenylate cyclase activity. The chain is 5-hydroxytryptamine receptor 1F (HTR1F) from Cavia porcellus (Guinea pig).